The following is a 447-amino-acid chain: ATP-dependent protease ATPase subunit HslU (447 aa).

ATP-binding positions include Ile18, 60-65 (GVGKTE), Asp259, Glu325, and Arg397.

Belongs to the ClpX chaperone family. HslU subfamily. In terms of assembly, a double ring-shaped homohexamer of HslV is capped on each side by a ring-shaped HslU homohexamer. The assembly of the HslU/HslV complex is dependent on binding of ATP.

Its subcellular location is the cytoplasm. ATPase subunit of a proteasome-like degradation complex; this subunit has chaperone activity. The binding of ATP and its subsequent hydrolysis by HslU are essential for unfolding of protein substrates subsequently hydrolyzed by HslV. HslU recognizes the N-terminal part of its protein substrates and unfolds these before they are guided to HslV for hydrolysis. This Burkholderia pseudomallei (strain 668) protein is ATP-dependent protease ATPase subunit HslU.